Reading from the N-terminus, the 293-residue chain is 4-hydroxy-tetrahydrodipicolinate synthase (293 aa).

Thr47 is a pyruvate binding site. Residue Tyr135 is the Proton donor/acceptor of the active site. Lys163 functions as the Schiff-base intermediate with substrate in the catalytic mechanism. Pyruvate is bound at residue Val205.

It belongs to the DapA family. As to quaternary structure, homotetramer; dimer of dimers.

The protein resides in the cytoplasm. The enzyme catalyses L-aspartate 4-semialdehyde + pyruvate = (2S,4S)-4-hydroxy-2,3,4,5-tetrahydrodipicolinate + H2O + H(+). Its pathway is amino-acid biosynthesis; L-lysine biosynthesis via DAP pathway; (S)-tetrahydrodipicolinate from L-aspartate: step 3/4. Functionally, catalyzes the condensation of (S)-aspartate-beta-semialdehyde [(S)-ASA] and pyruvate to 4-hydroxy-tetrahydrodipicolinate (HTPA). The protein is 4-hydroxy-tetrahydrodipicolinate synthase of Methylibium petroleiphilum (strain ATCC BAA-1232 / LMG 22953 / PM1).